Consider the following 453-residue polypeptide: Iron-sulfur cluster assembly SufBD family protein slr0076 (453 aa).

It belongs to the iron-sulfur cluster assembly SufBD family.

This is Iron-sulfur cluster assembly SufBD family protein slr0076 from Synechocystis sp. (strain ATCC 27184 / PCC 6803 / Kazusa).